The primary structure comprises 291 residues: Pantothenate synthetase (291 aa).

30–37 (MGNLHEGH) provides a ligand contact to ATP. H37 acts as the Proton donor in catalysis. (R)-pantoate is bound at residue Q61. Q61 contributes to the beta-alanine binding site. Residue 149-152 (GEKD) participates in ATP binding. Q155 lines the (R)-pantoate pocket. Residues V178 and 186–189 (MSSR) each bind ATP.

It belongs to the pantothenate synthetase family. In terms of assembly, homodimer.

It is found in the cytoplasm. The enzyme catalyses (R)-pantoate + beta-alanine + ATP = (R)-pantothenate + AMP + diphosphate + H(+). It participates in cofactor biosynthesis; (R)-pantothenate biosynthesis; (R)-pantothenate from (R)-pantoate and beta-alanine: step 1/1. Functionally, catalyzes the condensation of pantoate with beta-alanine in an ATP-dependent reaction via a pantoyl-adenylate intermediate. This chain is Pantothenate synthetase, found in Aliivibrio fischeri (strain ATCC 700601 / ES114) (Vibrio fischeri).